The chain runs to 205 residues: Methylthioribulose-1-phosphate dehydratase (205 aa).

Positions 96 and 98 each coordinate Zn(2+).

It belongs to the aldolase class II family. MtnB subfamily. Zn(2+) serves as cofactor.

The catalysed reaction is 5-(methylsulfanyl)-D-ribulose 1-phosphate = 5-methylsulfanyl-2,3-dioxopentyl phosphate + H2O. It functions in the pathway amino-acid biosynthesis; L-methionine biosynthesis via salvage pathway; L-methionine from S-methyl-5-thio-alpha-D-ribose 1-phosphate: step 2/6. In terms of biological role, catalyzes the dehydration of methylthioribulose-1-phosphate (MTRu-1-P) into 2,3-diketo-5-methylthiopentyl-1-phosphate (DK-MTP-1-P). The protein is Methylthioribulose-1-phosphate dehydratase of Pseudomonas aeruginosa (strain UCBPP-PA14).